The primary structure comprises 276 residues: MAPRKRTQNAKSKKNPKAPKLEAFLLDFDDEVHTIVERLKEKTNNLLKDADNLYKTALIKLPMAVRKMNWIEYCNLEKPKSPVDDSKVREEAAQVELAIAGNHTIPKVAAKEAKSSANSEDENMAPLKSTMKKKKASKKAPSTSKKPRTLSISKQGGTIQRTTRKPLITPARSFLDSSIIGATPLITPRFDPRLPKTPALRSALHREKVYSMSVNGSPLSAGGEDIVISVPIGNGECIQLLASEMDSVDLSQLDEKALRSIRNLQNRLTTLCGSSK.

The disordered stretch occupies residues 111-158 (KEAKSSANSEDENMAPLKSTMKKKKASKKAPSTSKKPRTLSISKQGGT).

This sequence belongs to the borealin family. In terms of assembly, component of the CPC complex.

Its subcellular location is the nucleus. The protein localises to the chromosome. It localises to the centromere. The protein resides in the cytoplasm. It is found in the cytoskeleton. Its subcellular location is the spindle. In terms of biological role, component of the chromosomal passenger complex (CPC), a complex that acts as a key regulator of mitosis. The CPC complex has essential functions at the centromere in ensuring correct chromosome alignment and segregation and is required for chromatin-induced microtubule stabilization and spindle assembly. The chain is Borealin (cdca8) from Danio rerio (Zebrafish).